The chain runs to 838 residues: Protein kintoun (838 aa).

Disordered regions lie at residues 106–125, 212–238, 370–411, 557–696, and 776–838; these read RPKN…LNWS, NPTA…GKPE, LRHF…TSSP, NAPL…DSCS, and QQRR…EMDD. The span at 114–125 shows a compositional bias: polar residues; the sequence is DPSSGSRGLNWS. Positions 370 to 380 are enriched in basic and acidic residues; the sequence is LRHFSREDSGV. Ser-378 is modified (phosphoserine). Residues 389–398 are compositionally biased toward acidic residues; that stretch reads PVEEDPDGEL. Positions 557 to 572 are enriched in basic and acidic residues; that stretch reads NAPLDVEFERNQEGHA. A compositionally biased stretch (acidic residues) spans 583–592; that stretch reads EEEEEEEDKE. Positions 601–611 are enriched in low complexity; the sequence is DQQQQQQVQNK. 2 stretches are compositionally biased toward basic residues: residues 612-623 and 673-683; these read KSGKKQRKRNKK and RSHRGILKRFS. Ser-781 carries the post-translational modification Phosphoserine. Residues 789 to 802 show a composition bias toward basic and acidic residues; the sequence is EETRGSALKQKENP.

Belongs to the PIH1 family. Kintoun subfamily. In terms of assembly, interacts with Pp1alpha-96A, Pp1-87B, Pp1-13C and flw.

The protein localises to the cytoplasm. In terms of biological role, required for cytoplasmic pre-assembly of axonemal dyneins, thereby playing a central role in motility in cilia and flagella. Involved in pre-assembly of dynein arm complexes in the cytoplasm before intraflagellar transport loads them for the ciliary compartment. The protein is Protein kintoun of Drosophila sechellia (Fruit fly).